Here is a 639-residue protein sequence, read N- to C-terminus: Alpha-dioxygenase 1 (639 aa).

Histidine 163 functions as the Proton acceptor in the catalytic mechanism. Aspartate 164 contributes to the Ca(2+) binding site. Position 168 (histidine 168) interacts with heme b. The Ca(2+) site is built by threonine 216, tryptophan 218, aspartate 220, and serine 222. Heme b-binding residues include histidine 389, arginine 486, and arginine 490.

This sequence belongs to the peroxidase family. In terms of assembly, forms monomers in solution. Heme b is required as a cofactor. The cofactor is Ca(2+). In terms of tissue distribution, expressed in roots (epiderm), mature flowers (e.g. anthers) and senescing leaves.

It is found in the lipid droplet. It carries out the reaction a 1,2-saturated fatty acid + O2 = a (2R)-2-hydroperoxy fatty acid. The catalysed reaction is (9Z,12Z,15Z)-octadecatrienoate + O2 = (R)-2-hydroperoxy-(9Z,12Z,15Z)-octadecatrienoate. The enzyme catalyses hexadecanoate + O2 = (2R)-2-hydroperoxyhexadecanoate. It catalyses the reaction (9Z,12Z)-octadecadienoate + O2 = (2R,9Z,12Z)-2-hydroperoxyoctadecadienoate. It carries out the reaction (9Z)-octadecenoate + O2 = (2R,9Z)-2-hydroperoxyoctadecenoate. Alpha-dioxygenase that catalyzes the primary oxygenation step of a variety of 14-20 carbon fatty acids, containing up to three unsaturated bonds, into their corresponding 2R-hydroperoxides. Involved in the production of oxylipins that function in cell signaling, wound healing, and protection from infection. Mediates protection against oxidative stress and cell death, probably by generating some lipid-derived molecules. Promotes local and systemic plant defense in a salicylic acid (SA)-dependent manner, including the establishment of systemic acquired resistance (SAR) in response to incompatible interaction. Involved in a negative regulation of abscisic acid (ABA)-mediated signaling pathway. The protein is Alpha-dioxygenase 1 of Arabidopsis thaliana (Mouse-ear cress).